A 341-amino-acid chain; its full sequence is N-acetyl-gamma-glutamyl-phosphate reductase (341 aa).

C145 is a catalytic residue.

The protein belongs to the NAGSA dehydrogenase family. Type 1 subfamily.

Its subcellular location is the cytoplasm. It catalyses the reaction N-acetyl-L-glutamate 5-semialdehyde + phosphate + NADP(+) = N-acetyl-L-glutamyl 5-phosphate + NADPH + H(+). The protein operates within amino-acid biosynthesis; L-arginine biosynthesis; N(2)-acetyl-L-ornithine from L-glutamate: step 3/4. In terms of biological role, catalyzes the NADPH-dependent reduction of N-acetyl-5-glutamyl phosphate to yield N-acetyl-L-glutamate 5-semialdehyde. The polypeptide is N-acetyl-gamma-glutamyl-phosphate reductase (Methanothrix thermoacetophila (strain DSM 6194 / JCM 14653 / NBRC 101360 / PT) (Methanosaeta thermophila)).